The chain runs to 632 residues: X-ray repair cross-complementing protein 5 (632 aa).

The Schiff-base intermediate with DNA; for 5'-deoxyribose-5-phosphate lyase activity role is filled by arginine 52. One can recognise a Ku domain in the interval 283-490 (LYLNKDLSFS…VDKMKGIIQK (208 aa)). The segment at 555–578 (DYSPEGKAAKRKQAGDAQAEKRPK) is disordered. The SAP domain occupies 595–629 (LGKLTVSALKDTCRHYGLRSGGKKQELIDALTEYF).

Belongs to the ku70 family. Heterodimer composed of XRCC5/Ku80 and XRCC6/Ku70. Component of the core long-range non-homologous end joining (NHEJ) complex (also named DNA-PK complex) composed of PRKDC, LIG4, XRCC4, XRCC6/Ku70, XRCC5/Ku86 and NHEJ1/XLF. Additional component of the NHEJ complex includes PAXX. Following autophosphorylation, PRKDC dissociates from DNA, leading to formation of the short-range NHEJ complex, composed of LIG4, XRCC4, XRCC6/Ku70, XRCC5/Ku86 and NHEJ1/XLF. Phosphorylated on serine residues.

Its subcellular location is the nucleus. The protein resides in the chromosome. Its function is as follows. Single-stranded DNA-dependent ATP-dependent helicase that plays a key role in DNA non-homologous end joining (NHEJ) by recruiting DNA-PK to DNA. Required for double-strand break repair and V(D)J recombination. Also has a role in chromosome translocation. Has a role in chromosome translocation. The DNA helicase II complex binds preferentially to fork-like ends of double-stranded DNA in a cell cycle-dependent manner. It works in the 3'-5' direction. During NHEJ, the XRCC5-XRRC6 dimer performs the recognition step: it recognizes and binds to the broken ends of the DNA and protects them from further resection. Binding to DNA may be mediated by XRCC6. The XRCC5-XRRC6 dimer acts as a regulatory subunit of the DNA-dependent protein kinase complex DNA-PK by increasing the affinity of the catalytic subunit PRKDC to DNA by 100-fold. The XRCC5-XRRC6 dimer is probably involved in stabilizing broken DNA ends and bringing them together. The assembly of the DNA-PK complex to DNA ends is required for the NHEJ ligation step. Probably also acts as a 5'-deoxyribose-5-phosphate lyase (5'-dRP lyase), by catalyzing the beta-elimination of the 5' deoxyribose-5-phosphate at an abasic site near double-strand breaks. 5'-dRP lyase activity allows to 'clean' the termini of abasic sites, a class of nucleotide damage commonly associated with strand breaks, before such broken ends can be joined. The XRCC5-XRRC6 dimer together with APEX1 acts as a negative regulator of transcription. In Gallus gallus (Chicken), this protein is X-ray repair cross-complementing protein 5 (XRCC6).